A 969-amino-acid polypeptide reads, in one-letter code: Isoleucine--tRNA ligase (969 aa).

The short motif at 70-80 is the 'HIGH' region element; it reads PYANGAIHIGH. An L-isoleucyl-5'-AMP-binding site is contributed by glutamate 601. Positions 642–646 match the 'KMSKS' region motif; it reads KMSKS. Lysine 645 contacts ATP.

It belongs to the class-I aminoacyl-tRNA synthetase family. IleS type 1 subfamily. Monomer.

Its subcellular location is the cytoplasm. It catalyses the reaction tRNA(Ile) + L-isoleucine + ATP = L-isoleucyl-tRNA(Ile) + AMP + diphosphate. Its function is as follows. Catalyzes the attachment of isoleucine to tRNA(Ile). As IleRS can inadvertently accommodate and process structurally similar amino acids such as valine, to avoid such errors it has two additional distinct tRNA(Ile)-dependent editing activities. One activity is designated as 'pretransfer' editing and involves the hydrolysis of activated Val-AMP. The other activity is designated 'posttransfer' editing and involves deacylation of mischarged Val-tRNA(Ile). This Caulobacter vibrioides (strain ATCC 19089 / CIP 103742 / CB 15) (Caulobacter crescentus) protein is Isoleucine--tRNA ligase.